Reading from the N-terminus, the 54-residue chain is Ovomucoid (54 aa).

In terms of domain architecture, Kazal-like spans 4 to 54 (VDCSEYPKPVCSPEYMPLCGSDSKTYNNKCDFCSAVVESNGTLTLGHFGKC). 3 disulfide bridges follow: Cys6–Cys36, Cys14–Cys33, and Cys22–Cys54. A glycan (N-linked (GlcNAc...) asparagine) is linked at Asn43.

It localises to the secreted. The polypeptide is Ovomucoid (Casuarius casuarius (Southern cassowary)).